Reading from the N-terminus, the 711-residue chain is Polyribonucleotide nucleotidyltransferase (711 aa).

Residues aspartate 490 and aspartate 496 each contribute to the Mg(2+) site. The KH domain occupies 557–619; it reads PRIETMTIPK…KCIDDAMRII (63 aa). The region spanning 629 to 699 is the S1 motif domain; the sequence is GEVYVGKVRS…KTGKFKLSHK (71 aa).

This sequence belongs to the polyribonucleotide nucleotidyltransferase family. The cofactor is Mg(2+).

It localises to the cytoplasm. The enzyme catalyses RNA(n+1) + phosphate = RNA(n) + a ribonucleoside 5'-diphosphate. Involved in mRNA degradation. Catalyzes the phosphorolysis of single-stranded polyribonucleotides processively in the 3'- to 5'-direction. This is Polyribonucleotide nucleotidyltransferase from Phocaeicola vulgatus (strain ATCC 8482 / DSM 1447 / JCM 5826 / CCUG 4940 / NBRC 14291 / NCTC 11154) (Bacteroides vulgatus).